The primary structure comprises 401 residues: 8-amino-7-oxononanoate synthase (401 aa).

Arg24 serves as a coordination point for substrate. A pyridoxal 5'-phosphate-binding site is contributed by 111 to 112 (GF). His137 is a substrate binding site. Positions 183, 211, and 240 each coordinate pyridoxal 5'-phosphate. Residue Lys243 is modified to N6-(pyridoxal phosphate)lysine. Thr357 provides a ligand contact to substrate.

This sequence belongs to the class-II pyridoxal-phosphate-dependent aminotransferase family. BioF subfamily. Homodimer. The cofactor is pyridoxal 5'-phosphate.

The catalysed reaction is 6-carboxyhexanoyl-[ACP] + L-alanine + H(+) = (8S)-8-amino-7-oxononanoate + holo-[ACP] + CO2. Its pathway is cofactor biosynthesis; biotin biosynthesis. Its function is as follows. Catalyzes the decarboxylative condensation of pimeloyl-[acyl-carrier protein] and L-alanine to produce 8-amino-7-oxononanoate (AON), [acyl-carrier protein], and carbon dioxide. The sequence is that of 8-amino-7-oxononanoate synthase from Xanthomonas axonopodis pv. citri (strain 306).